We begin with the raw amino-acid sequence, 174 residues long: Large ribosomal subunit protein uL10 (174 aa).

This sequence belongs to the universal ribosomal protein uL10 family. Part of the ribosomal stalk of the 50S ribosomal subunit. The N-terminus interacts with L11 and the large rRNA to form the base of the stalk. The C-terminus forms an elongated spine to which L12 dimers bind in a sequential fashion forming a multimeric L10(L12)X complex.

Forms part of the ribosomal stalk, playing a central role in the interaction of the ribosome with GTP-bound translation factors. In Methylobacillus flagellatus (strain ATCC 51484 / DSM 6875 / VKM B-1610 / KT), this protein is Large ribosomal subunit protein uL10.